The sequence spans 224 residues: UPF0758 protein VP0184 (224 aa).

Residues 102 to 224 (ALTSPEQTKL…SVSFAERGWI (123 aa)) enclose the MPN domain. Residues His-173, His-175, and Asp-186 each contribute to the Zn(2+) site. Positions 173-186 (HNHPSGVAEPSQAD) match the JAMM motif motif.

Belongs to the UPF0758 family.

This is UPF0758 protein VP0184 from Vibrio parahaemolyticus serotype O3:K6 (strain RIMD 2210633).